We begin with the raw amino-acid sequence, 949 residues long: Protocadherin alpha-11 (949 aa).

Residues 1–29 form the signal peptide; that stretch reads MFGFQRRGLGTPRLQLWLLLLEFWEVGSG. Cadherin domains lie at 30–133, 157–242, 243–349, 350–454, 455–564, and 580–677; these read QLHY…PPVF, ASDA…DPDF, DKSE…SPEV, AVTS…APAF, AQPE…APAL, and VPRS…APKA. Residues 30–696 lie on the Extracellular side of the membrane; the sequence is QLHYSVSEEA…SPEAALVDVN (667 aa). 2 N-linked (GlcNAc...) asparagine glycosylation sites follow: Asn-265 and Asn-304. N-linked (GlcNAc...) asparagine glycosylation is present at Asn-547. The chain crosses the membrane as a helical span at residues 697 to 717; it reads VYLIIAICVVSSLLVLTLLLY. Topologically, residues 718–949 are cytoplasmic; the sequence is TALWCSATPT…GNSTTDNSDQ (232 aa). PXXP repeat units lie at residues 733–736 and 773–776; these read PGKP and PSLP. The interval 733–893 is 6 X 4 AA repeats of P-X-X-P; sequence PGKPTLVCSR…PDKFIIPGSP (161 aa). Disordered stretches follow at residues 753 to 807, 826 to 858, and 870 to 889; these read RRQR…DWRY, ILRAGPGGPDQQWPTVSSATPEPEAGEVSPPVG, and YGPGNPKQSGPGELPDKFII. Over residues 780–789 the composition is skewed to basic and acidic residues; that stretch reads NKEEEGERQE. 4 PXXP repeats span residues 795–798, 831–834, 872–875, and 890–893; these read PGQP, PGGP, PGNP, and PGSP. The tract at residues 900–949 is disordered; the sequence is QEPANSQIDKSDFITFGKKEETKKKKKKKKGNKTQEKKEKGNSTTDNSDQ. Positions 908–922 are enriched in basic and acidic residues; the sequence is DKSDFITFGKKEETK.

The protein resides in the cell membrane. In terms of biological role, potential calcium-dependent cell-adhesion protein. May be involved in the establishment and maintenance of specific neuronal connections in the brain. The chain is Protocadherin alpha-11 (PCDHA11) from Pan troglodytes (Chimpanzee).